The chain runs to 671 residues: K(+)-insensitive pyrophosphate-energized proton pump (671 aa).

A run of 5 helical transmembrane segments spans residues 4-24 (LIFT…FFAK), 57-77 (TIAV…DEGL), 79-99 (IAAG…IGMS), 128-148 (AVTG…LYIL), and 156-176 (VGFG…GGIF). Residue lysine 178 coordinates substrate. Mg(2+)-binding residues include aspartate 181, aspartate 185, asparagine 208, and aspartate 211. A run of 6 helical transmembrane segments spans residues 223 to 243 (LFET…LIIG), 249 to 269 (VLYP…SVFF), 285 to 305 (GVGG…GFLM), 310 to 330 (FFYV…VTEY), 365 to 385 (TLVP…IVGG), and 393 to 413 (LYGI…IVAL). Aspartate 421 lines the Mg(2+) pocket. 4 helical membrane-spanning segments follow: residues 452–472 (AVTK…LFAD), 490–510 (VVLS…AVMM), 558–578 (MAMP…FLGP), and 579–599 (EALA…ALMM). Aspartate 607, aspartate 633, and aspartate 637 together coordinate Ca(2+). Lysine 640 provides a ligand contact to substrate. A helical transmembrane segment spans residues 650–670 (LIKVVNMVAILFSPLIIGGGF).

The protein belongs to the H(+)-translocating pyrophosphatase (TC 3.A.10) family. K(+)-insensitive subfamily. Homodimer. It depends on Mg(2+) as a cofactor.

The protein localises to the cell membrane. The catalysed reaction is diphosphate + H2O + H(+)(in) = 2 phosphate + 2 H(+)(out). Proton pump that utilizes the energy of pyrophosphate hydrolysis as the driving force for proton movement across the membrane. Generates a proton motive force. The chain is K(+)-insensitive pyrophosphate-energized proton pump from Methanosarcina mazei (strain ATCC BAA-159 / DSM 3647 / Goe1 / Go1 / JCM 11833 / OCM 88) (Methanosarcina frisia).